The sequence spans 567 residues: Urease subunit alpha (567 aa).

Positions 129–567 (GGIDTHIHWI…LPMAQRYFLF (439 aa)) constitute a Urease domain. The Ni(2+) site is built by His-134, His-136, and Lys-217. Lys-217 carries the post-translational modification N6-carboxylysine. A substrate-binding site is contributed by His-219. Positions 246 and 272 each coordinate Ni(2+). Catalysis depends on His-320, which acts as the Proton donor. Residue Asp-360 participates in Ni(2+) binding.

It belongs to the metallo-dependent hydrolases superfamily. Urease alpha subunit family. As to quaternary structure, heterotrimer of UreA (gamma), UreB (beta) and UreC (alpha) subunits. Three heterotrimers associate to form the active enzyme. The apoenzyme interacts with an accessory complex composed of UreD, UreF and UreG, which is required for the assembly of the nickel containing metallocenter of UreC. The UreE protein may also play a direct role as a metallochaperone in nickel transfer to the urease apoprotein. Ni cation serves as cofactor. Carboxylation allows a single lysine to coordinate two nickel ions.

It is found in the cytoplasm. It catalyses the reaction urea + 2 H2O + H(+) = hydrogencarbonate + 2 NH4(+). It participates in nitrogen metabolism; urea degradation; CO(2) and NH(3) from urea (urease route): step 1/1. With respect to regulation, the apoenzyme can be activated in vitro in the presence of nickel ions and carbon dioxide, which promotes carboxylation of Lys-217. This is Urease subunit alpha from Klebsiella aerogenes (Enterobacter aerogenes).